The following is a 294-amino-acid chain: Ribosomal RNA small subunit methyltransferase H (294 aa).

S-adenosyl-L-methionine is bound by residues 40–42, Asp59, Phe86, Asp102, and Gln109; that span reads GGH.

The protein belongs to the methyltransferase superfamily. RsmH family.

The protein localises to the cytoplasm. The catalysed reaction is cytidine(1402) in 16S rRNA + S-adenosyl-L-methionine = N(4)-methylcytidine(1402) in 16S rRNA + S-adenosyl-L-homocysteine + H(+). In terms of biological role, specifically methylates the N4 position of cytidine in position 1402 (C1402) of 16S rRNA. The chain is Ribosomal RNA small subunit methyltransferase H from Cyanothece sp. (strain PCC 7425 / ATCC 29141).